Reading from the N-terminus, the 245-residue chain is MAVRASFENNCEIGCFAKLTNTYCLVAIGGSENFYSVFEGELSDTIPVVHASIAGCRIIGRMCVGNRHGLLVPNNTTDQELQHIRNSLPDTVQIRRVEERLSALGNVTTCNDYVALVHPDLDRETEEILADVLKVEVFRQTVADQVLVGSYCVFSNQGGLVHPKTSIEDQDELSSLLQVPLVAGTVNRGSEVIAAGMVVNDWCAFCGLDTTSTELSVVESVFKLNEAQPSTIATSMRDSLIDSLT.

Tyr-113 is subject to Phosphotyrosine. Thr-165 bears the Phosphothreonine mark. At Ser-166 the chain carries Phosphoserine. A phosphoserine; by CK1 mark is found at Ser-174 and Ser-175. Ser-235 bears the Phosphoserine; by PKC mark. Residues Ser-239 and Ser-243 each carry the phosphoserine modification.

Belongs to the eIF-6 family. As to quaternary structure, monomer. Associates with the 60S ribosomal subunit. Interacts with RACK1. Interacts with DICER1, AGO2, TARBP2, MOV10 and RPL7A; they form a large RNA-induced silencing complex (RISC). In terms of processing, phosphorylation at Ser-174 and Ser-175 by CSNK1D/CK1 promotes nuclear export. Post-translationally, ufmylated by UFL1. As to expression, expressed at very high levels in colon carcinoma with lower levels in normal colon and ileum and lowest levels in kidney and muscle (at protein level).

Its subcellular location is the cytoplasm. The protein resides in the nucleus. The protein localises to the nucleolus. Its function is as follows. Binds to the 60S ribosomal subunit and prevents its association with the 40S ribosomal subunit to form the 80S initiation complex in the cytoplasm. Behaves as a stimulatory translation initiation factor downstream insulin/growth factors. Is also involved in ribosome biogenesis. Associates with pre-60S subunits in the nucleus and is involved in its nuclear export. Cytoplasmic release of TIF6 from 60S subunits and nuclear relocalization is promoted by a RACK1 (RACK1)-dependent protein kinase C activity. In tissues responsive to insulin, controls fatty acid synthesis and glycolysis by exerting translational control of adipogenic transcription factors such as CEBPB, CEBPD and ATF4 that have G/C rich or uORF in their 5'UTR. Required for ROS-dependent megakaryocyte maturation and platelets formation, controls the expression of mitochondrial respiratory chain genes involved in reactive oxygen species (ROS) synthesis. Involved in miRNA-mediated gene silencing by the RNA-induced silencing complex (RISC). Required for both miRNA-mediated translational repression and miRNA-mediated cleavage of complementary mRNAs by RISC. Modulates cell cycle progression and global translation of pre-B cells, its activation seems to be rate-limiting in tumorigenesis and tumor growth. The chain is Eukaryotic translation initiation factor 6 from Homo sapiens (Human).